The following is a 63-amino-acid chain: Toxin S6C6 (63 aa).

Cystine bridges form between cysteine 3-cysteine 24, cysteine 6-cysteine 11, cysteine 17-cysteine 39, cysteine 43-cysteine 55, and cysteine 56-cysteine 61.

Belongs to the three-finger toxin family. Ancestral subfamily. Orphan group XIX sub-subfamily. In terms of tissue distribution, expressed by the venom gland.

It localises to the secreted. Functionally, may enhance presynaptic acetylcholine release. This is Toxin S6C6 from Dendroaspis jamesoni kaimosae (Eastern Jameson's mamba).